A 432-amino-acid polypeptide reads, in one-letter code: Adenylosuccinate synthetase (432 aa).

GTP is bound by residues 12–18 (GDEGKGK) and 40–42 (GHT). Asp13 (proton acceptor) is an active-site residue. Asp13 and Gly40 together coordinate Mg(2+). IMP-binding positions include 13-16 (DEGK), 38-41 (NAGH), Thr130, Arg144, Gln225, Thr240, and Arg304. The Proton donor role is filled by His41. Substrate is bound at residue 300–306 (STTGRPR). GTP is bound by residues Arg306, 332 to 334 (KLD), and 414 to 416 (SVG).

Belongs to the adenylosuccinate synthetase family. In terms of assembly, homodimer. Mg(2+) is required as a cofactor.

It localises to the cytoplasm. The enzyme catalyses IMP + L-aspartate + GTP = N(6)-(1,2-dicarboxyethyl)-AMP + GDP + phosphate + 2 H(+). It functions in the pathway purine metabolism; AMP biosynthesis via de novo pathway; AMP from IMP: step 1/2. Functionally, plays an important role in the de novo pathway of purine nucleotide biosynthesis. Catalyzes the first committed step in the biosynthesis of AMP from IMP. The sequence is that of Adenylosuccinate synthetase from Citrifermentans bemidjiense (strain ATCC BAA-1014 / DSM 16622 / JCM 12645 / Bem) (Geobacter bemidjiensis).